The primary structure comprises 544 residues: DNA mismatch repair protein MutL (544 aa).

Belongs to the DNA mismatch repair MutL/HexB family.

Functionally, this protein is involved in the repair of mismatches in DNA. It is required for dam-dependent methyl-directed DNA mismatch repair. May act as a 'molecular matchmaker', a protein that promotes the formation of a stable complex between two or more DNA-binding proteins in an ATP-dependent manner without itself being part of a final effector complex. This Thermodesulfovibrio yellowstonii (strain ATCC 51303 / DSM 11347 / YP87) protein is DNA mismatch repair protein MutL.